We begin with the raw amino-acid sequence, 545 residues long: 2-succinyl-5-enolpyruvyl-6-hydroxy-3-cyclohexene-1-carboxylate synthase (545 aa).

Residues 184–209 are disordered; that stretch reads PLVPDPEPHGAPTPAGRPGGRPWTYT. Positions 195-205 are enriched in low complexity; sequence PTPAGRPGGRP.

This sequence belongs to the TPP enzyme family. MenD subfamily. As to quaternary structure, homodimer. It depends on Mg(2+) as a cofactor. Mn(2+) serves as cofactor. Thiamine diphosphate is required as a cofactor.

The catalysed reaction is isochorismate + 2-oxoglutarate + H(+) = 5-enolpyruvoyl-6-hydroxy-2-succinyl-cyclohex-3-ene-1-carboxylate + CO2. It participates in quinol/quinone metabolism; 1,4-dihydroxy-2-naphthoate biosynthesis; 1,4-dihydroxy-2-naphthoate from chorismate: step 2/7. Its pathway is quinol/quinone metabolism; menaquinone biosynthesis. In terms of biological role, catalyzes the thiamine diphosphate-dependent decarboxylation of 2-oxoglutarate and the subsequent addition of the resulting succinic semialdehyde-thiamine pyrophosphate anion to isochorismate to yield 2-succinyl-5-enolpyruvyl-6-hydroxy-3-cyclohexene-1-carboxylate (SEPHCHC). This Mycobacterium avium (strain 104) protein is 2-succinyl-5-enolpyruvyl-6-hydroxy-3-cyclohexene-1-carboxylate synthase.